The chain runs to 341 residues: Twinfilin-2 (341 aa).

ADF-H domains follow at residues 1–131 (ATEE…KHLS) and 169–305 (GLAF…DEVH). Lysine 6 is modified (N6-acetyllysine). Phosphotyrosine is present on tyrosine 301. Positions 314 to 341 (AFAKPKGPGGKRGHKRLIRGPGENGDDS) are disordered. The span at 322–331 (GGKRGHKRLI) shows a compositional bias: basic residues. Phosphoserine is present on serine 341.

It belongs to the actin-binding proteins ADF family. Twinfilin subfamily. In terms of assembly, interacts with G-actin; ADP-actin form and capping protein (CP). May also be able to interact with TWF1 and phosphoinositides, PI(4,5)P2. When bound to PI(4,5)P2, it is down-regulated. Interacts with MYO7A. In terms of processing, phosphorylated on both serine and threonine residues.

It localises to the cytoplasm. The protein localises to the cytoskeleton. Its subcellular location is the perinuclear region. It is found in the cell projection. The protein resides in the stereocilium. Actin-binding protein involved in motile and morphological processes. Inhibits actin polymerization, likely by sequestering G-actin. By capping the barbed ends of filaments, it also regulates motility. Seems to play an important role in clathrin-mediated endocytosis and distribution of endocytic organelles. May play a role in regulating the mature length of the middle and short rows of stereocilia. In Pongo abelii (Sumatran orangutan), this protein is Twinfilin-2 (TWF2).